Reading from the N-terminus, the 143-residue chain is uncharacterized protein (143 aa).

Residues 1–38 (MKYWKYLSQLTIRRPLTYNNALLYRNRFPSILTWKRSA) constitute a mitochondrion transit peptide.

The protein resides in the mitochondrion. This is an uncharacterized protein from Schizosaccharomyces pombe (strain 972 / ATCC 24843) (Fission yeast).